We begin with the raw amino-acid sequence, 301 residues long: Triplex capsid protein 2 (301 aa).

It belongs to the herpesviridae TRX2 protein family. In terms of assembly, interacts with TRX1 and major capisd protein/MCP.

The protein localises to the virion. The protein resides in the host nucleus. Structural component of the T=16 icosahedral capsid. The capsid is composed of pentamers and hexamers of major capsid protein/MCP, which are linked together by heterotrimers called triplexes. These triplexes are formed by a single molecule of triplex protein 1/TRX1 and two copies of triplex protein 2/TRX2. Additionally, TRX1 is required for efficient transport of TRX2 to the nucleus, which is the site of capsid assembly. The protein is Triplex capsid protein 2 of Homo sapiens (Human).